We begin with the raw amino-acid sequence, 1435 residues long: Gag-Pol polyprotein (1435 aa).

Glycine 2 carries N-myristoyl glycine; by host lipidation. Positions 7 to 31 (VLTGSKLDAWEQIRLKPGSKKKYRL) are interaction with Gp41. The interval 8–43 (LTGSKLDAWEQIRLKPGSKKKYRLKHLVWASRELER) is interaction with host CALM1. Residues 12–19 (KLDAWEQI) are interaction with host AP3D1. The tract at residues 14 to 33 (DAWEQIRLKPGSKKKYRLKH) is interaction with membrane phosphatidylinositol 4,5-bisphosphate and RNA. The Nuclear export signal signature appears at 16–22 (WEQIRLK). Positions 26–32 (KKKYRLK) match the Nuclear localization signal motif. Residues 73-77 (DSLQS) form an interaction with membrane phosphatidylinositol 4,5-bisphosphate region. A Phosphotyrosine; by host modification is found at tyrosine 130. An interaction with human PPIA/CYPA and NUP153 region spans residues 187–225 (NAIGGHQGALQVLKEVINEEAVEWDRTHPPPVGPLPPGQ). Residues 212-232 (RTHPPPVGPLPPGQIREPTGS) form a disordered region. The tract at residues 276–362 (YSPVSILDIK…GGPTHKARVL (87 aa)) is dimerization/Multimerization of capsid protein p24. CCHC-type zinc fingers lie at residues 394-411 (IKCF…NCRA) and 415-432 (KGCW…DCRN). The interval 455–480 (TSTPISPTDGGGSEGTGESGTERGPE) is disordered. The segment covering 463 to 472 (DGGGSEGTGE) has biased composition (gly residues). The segment at 488 to 492 (PQIPL) is dimerization of protease. The Peptidase A2 domain maps to 507–576 (CEVLLDTGAD…TPVNIIGRNI (70 aa)). Aspartate 512 functions as the For protease activity; shared with dimeric partner in the catalytic mechanism. Dimerization of protease regions lie at residues 536-542 (GIGGFIK) and 575-587 (NILT…LNFP). The Reverse transcriptase domain maps to 630–820 (EGKISRIGPE…PPFLWMGYEL (191 aa)). Residues aspartate 696, aspartate 771, and aspartate 772 each coordinate Mg(2+). An RT 'primer grip' region spans residues 813-821 (FLWMGYELH). A Tryptophan repeat motif motif is present at residues 984-1000 (WETWWADYWQATWIPEW). In terms of domain architecture, RNase H type-1 spans 1020–1143 (IMGAETYYVD…IDKLVSKDIR (124 aa)). Residues aspartate 1029, glutamate 1064, aspartate 1084, and aspartate 1135 each contribute to the Mg(2+) site. An Integrase-type zinc finger spans residues 1149 to 1190 (EGIDQAQEDHEKYHSNWKALASEFGLPPVVAKEIIASCPKCH). 4 residues coordinate Zn(2+): histidine 1158, histidine 1162, cysteine 1186, and cysteine 1189. The region spanning 1200–1350 (VDCSPEVWQI…TAGERIIDIL (151 aa)) is the Integrase catalytic domain. Aspartate 1210, aspartate 1262, and glutamate 1298 together coordinate Mg(2+). The segment at residues 1369-1416 (FRVYYRDSRDPIWKGPAQLLWKGEGAVVIQDKGDIKVVPRRKAKIIRE) is a DNA-binding region (integrase-type).

As to quaternary structure, homotrimer; further assembles as hexamers of trimers. Interacts with gp41 (via C-terminus). Interacts with host CALM1; this interaction induces a conformational change in the Matrix protein, triggering exposure of the myristate group. Interacts with host AP3D1; this interaction allows the polyprotein trafficking to multivesicular bodies during virus assembly. Part of the pre-integration complex (PIC) which is composed of viral genome, matrix protein, Vpr and integrase. Homodimer; the homodimer further multimerizes as homohexamers or homopentamers. Interacts with human PPIA/CYPA; This interaction stabilizes the capsid. Interacts with human NUP153. Interacts with host PDZD8; this interaction stabilizes the capsid. Interacts with monkey TRIM5; this interaction destabilizes the capsid. In terms of assembly, homodimer, whose active site consists of two apposed aspartic acid residues. As to quaternary structure, heterodimer of p66 RT and p51 RT (RT p66/p51). Heterodimerization of RT is essential for DNA polymerase activity. The overall folding of the subdomains is similar in p66 RT and p51 RT but the spatial arrangements of the subdomains are dramatically different. Homotetramer; may further associate as a homohexadecamer. Part of the pre-integration complex (PIC) which is composed of viral genome, matrix protein, Vpr and integrase. Interacts with human SMARCB1/INI1 and human PSIP1/LEDGF isoform 1. Interacts with human KPNA3; this interaction might play a role in nuclear import of the pre-integration complex. Interacts with human NUP153; this interaction might play a role in nuclear import of the pre-integration complex. The cofactor is Mg(2+). Post-translationally, specific enzymatic cleavages by the viral protease yield mature proteins. The protease is released by autocatalytic cleavage. The polyprotein is cleaved during and after budding, this process is termed maturation. Proteolytic cleavage of p66 RT removes the RNase H domain to yield the p51 RT subunit. Nucleocapsid protein p7 might be further cleaved after virus entry. Tyrosine phosphorylated presumably in the virion by a host kinase. Phosphorylation is apparently not a major regulator of membrane association. In terms of processing, phosphorylated possibly by host MAPK1; this phosphorylation is necessary for Pin1-mediated virion uncoating. Post-translationally, methylated by host PRMT6, impairing its function by reducing RNA annealing and the initiation of reverse transcription.

The protein localises to the host cell membrane. It localises to the host endosome. It is found in the host multivesicular body. Its subcellular location is the virion membrane. The protein resides in the host nucleus. The protein localises to the host cytoplasm. It localises to the virion. It carries out the reaction Specific for a P1 residue that is hydrophobic, and P1' variable, but often Pro.. It catalyses the reaction Endohydrolysis of RNA in RNA/DNA hybrids. Three different cleavage modes: 1. sequence-specific internal cleavage of RNA. Human immunodeficiency virus type 1 and Moloney murine leukemia virus enzymes prefer to cleave the RNA strand one nucleotide away from the RNA-DNA junction. 2. RNA 5'-end directed cleavage 13-19 nucleotides from the RNA end. 3. DNA 3'-end directed cleavage 15-20 nucleotides away from the primer terminus.. The enzyme catalyses 3'-end directed exonucleolytic cleavage of viral RNA-DNA hybrid.. The catalysed reaction is DNA(n) + a 2'-deoxyribonucleoside 5'-triphosphate = DNA(n+1) + diphosphate. Protease: The viral protease is inhibited by many synthetic protease inhibitors (PIs), such as amprenavir, atazanavir, indinavir, loprinavir, nelfinavir, ritonavir and saquinavir. Use of protease inhibitors in tritherapy regimens permit more ambitious therapeutic strategies. Reverse transcriptase/ribonuclease H: RT can be inhibited either by nucleoside RT inhibitors (NRTIs) or by non nucleoside RT inhibitors (NNRTIs). NRTIs act as chain terminators, whereas NNRTIs inhibit DNA polymerization by binding a small hydrophobic pocket near the RT active site and inducing an allosteric change in this region. Classical NRTIs are abacavir, adefovir (PMEA), didanosine (ddI), lamivudine (3TC), stavudine (d4T), tenofovir (PMPA), zalcitabine (ddC), and zidovudine (AZT). Classical NNRTIs are atevirdine (BHAP U-87201E), delavirdine, efavirenz (DMP-266), emivirine (I-EBU), and nevirapine (BI-RG-587). The tritherapies used as a basic effective treatment of AIDS associate two NRTIs and one NNRTI. Mediates, with Gag polyprotein, the essential events in virion assembly, including binding the plasma membrane, making the protein-protein interactions necessary to create spherical particles, recruiting the viral Env proteins, and packaging the genomic RNA via direct interactions with the RNA packaging sequence (Psi). Gag-Pol polyprotein may regulate its own translation, by the binding genomic RNA in the 5'-UTR. At low concentration, the polyprotein would promote translation, whereas at high concentration, the polyprotein would encapsidate genomic RNA and then shut off translation. Its function is as follows. Targets the polyprotein to the plasma membrane via a multipartite membrane-binding signal, that includes its myristoylated N-terminus. Matrix protein is part of the pre-integration complex. Implicated in the release from host cell mediated by Vpu. Binds to RNA. Functionally, forms the conical core that encapsulates the genomic RNA-nucleocapsid complex in the virion. Most core are conical, with only 7% tubular. The core is constituted by capsid protein hexamer subunits. The core is disassembled soon after virion entry. Host restriction factors such as TRIM5-alpha or TRIMCyp bind retroviral capsids and cause premature capsid disassembly, leading to blocks in reverse transcription. Capsid restriction by TRIM5 is one of the factors which restricts HIV-1 to the human species. Host PIN1 apparently facilitates the virion uncoating. On the other hand, interactions with PDZD8 or CYPA stabilize the capsid. In terms of biological role, encapsulates and protects viral dimeric unspliced genomic RNA (gRNA). Binds these RNAs through its zinc fingers. Acts as a nucleic acid chaperone which is involved in rearangement of nucleic acid secondary structure during gRNA retrotranscription. Also facilitates template switch leading to recombination. As part of the polyprotein, participates in gRNA dimerization, packaging, tRNA incorporation and virion assembly. Aspartyl protease that mediates proteolytic cleavages of Gag and Gag-Pol polyproteins during or shortly after the release of the virion from the plasma membrane. Cleavages take place as an ordered, step-wise cascade to yield mature proteins. This process is called maturation. Displays maximal activity during the budding process just prior to particle release from the cell. Also cleaves Nef and Vif, probably concomitantly with viral structural proteins on maturation of virus particles. Hydrolyzes host EIF4GI and PABP1 in order to shut off the capped cellular mRNA translation. The resulting inhibition of cellular protein synthesis serves to ensure maximal viral gene expression and to evade host immune response. Also mediates cleavage of host YTHDF3. Mediates cleavage of host CARD8, thereby activating the CARD8 inflammasome, leading to the clearance of latent HIV-1 in patient CD4(+) T-cells after viral reactivation; in contrast, HIV-1 can evade CARD8-sensing when its protease remains inactive in infected cells prior to viral budding. Its function is as follows. Multifunctional enzyme that converts the viral RNA genome into dsDNA in the cytoplasm, shortly after virus entry into the cell. This enzyme displays a DNA polymerase activity that can copy either DNA or RNA templates, and a ribonuclease H (RNase H) activity that cleaves the RNA strand of RNA-DNA heteroduplexes in a partially processive 3' to 5' endonucleasic mode. Conversion of viral genomic RNA into dsDNA requires many steps. A tRNA(3)-Lys binds to the primer-binding site (PBS) situated at the 5'-end of the viral RNA. RT uses the 3' end of the tRNA primer to perform a short round of RNA-dependent minus-strand DNA synthesis. The reading proceeds through the U5 region and ends after the repeated (R) region which is present at both ends of viral RNA. The portion of the RNA-DNA heteroduplex is digested by the RNase H, resulting in a ssDNA product attached to the tRNA primer. This ssDNA/tRNA hybridizes with the identical R region situated at the 3' end of viral RNA. This template exchange, known as minus-strand DNA strong stop transfer, can be either intra- or intermolecular. RT uses the 3' end of this newly synthesized short ssDNA to perform the RNA-dependent minus-strand DNA synthesis of the whole template. RNase H digests the RNA template except for two polypurine tracts (PPTs) situated at the 5'-end and near the center of the genome. It is not clear if both polymerase and RNase H activities are simultaneous. RNase H probably can proceed both in a polymerase-dependent (RNA cut into small fragments by the same RT performing DNA synthesis) and a polymerase-independent mode (cleavage of remaining RNA fragments by free RTs). Secondly, RT performs DNA-directed plus-strand DNA synthesis using the PPTs that have not been removed by RNase H as primers. PPTs and tRNA primers are then removed by RNase H. The 3' and 5' ssDNA PBS regions hybridize to form a circular dsDNA intermediate. Strand displacement synthesis by RT to the PBS and PPT ends produces a blunt ended, linear dsDNA copy of the viral genome that includes long terminal repeats (LTRs) at both ends. Functionally, catalyzes viral DNA integration into the host chromosome, by performing a series of DNA cutting and joining reactions. This enzyme activity takes place after virion entry into a cell and reverse transcription of the RNA genome in dsDNA. The first step in the integration process is 3' processing. This step requires a complex comprising the viral genome, matrix protein, Vpr and integrase. This complex is called the pre-integration complex (PIC). The integrase protein removes 2 nucleotides from each 3' end of the viral DNA, leaving recessed CA OH's at the 3' ends. In the second step, the PIC enters cell nucleus. This process is mediated through integrase and Vpr proteins, and allows the virus to infect a non dividing cell. This ability to enter the nucleus is specific of lentiviruses, other retroviruses cannot and rely on cell division to access cell chromosomes. In the third step, termed strand transfer, the integrase protein joins the previously processed 3' ends to the 5' ends of strands of target cellular DNA at the site of integration. The 5'-ends are produced by integrase-catalyzed staggered cuts, 5 bp apart. A Y-shaped, gapped, recombination intermediate results, with the 5'-ends of the viral DNA strands and the 3' ends of target DNA strands remaining unjoined, flanking a gap of 5 bp. The last step is viral DNA integration into host chromosome. This involves host DNA repair synthesis in which the 5 bp gaps between the unjoined strands are filled in and then ligated. Since this process occurs at both cuts flanking the HIV genome, a 5 bp duplication of host DNA is produced at the ends of HIV-1 integration. Alternatively, Integrase may catalyze the excision of viral DNA just after strand transfer, this is termed disintegration. This is Gag-Pol polyprotein (gag-pol) from Human immunodeficiency virus type 1 group O (isolate ANT70) (HIV-1).